The following is a 369-amino-acid chain: Beta-1,3-galactosyltransferase 9 (369 aa).

Residues 1 to 12 (MQVTFCRLRTHQ) lie on the Cytoplasmic side of the membrane. The helical; Signal-anchor for type II membrane protein transmembrane segment at 13 to 33 (WCFILFNVILFHALLFGTDFV) threads the bilayer. At 34–369 (EEYFLHSLPY…IKNNLMYFAD (336 aa)) the chain is on the lumenal side. N-linked (GlcNAc...) asparagine glycosylation is found at Asn-66, Asn-96, and Asn-109.

This sequence belongs to the glycosyltransferase 31 family.

Its subcellular location is the golgi apparatus membrane. Its function is as follows. Putative glycosyltransferase that could catalyze the transfer of galactose residues from UDP-alpha-D-galactose. In Homo sapiens (Human), this protein is Beta-1,3-galactosyltransferase 9.